The following is a 504-amino-acid chain: ATP synthase subunit alpha (504 aa).

170–177 (GDRQTGKT) provides a ligand contact to ATP.

It belongs to the ATPase alpha/beta chains family. In terms of assembly, F-type ATPases have 2 components, CF(1) - the catalytic core - and CF(0) - the membrane proton channel. CF(1) has five subunits: alpha(3), beta(3), gamma(1), delta(1), epsilon(1). CF(0) has four main subunits: a, b, b' and c.

Its subcellular location is the cellular thylakoid membrane. The catalysed reaction is ATP + H2O + 4 H(+)(in) = ADP + phosphate + 5 H(+)(out). Its function is as follows. Produces ATP from ADP in the presence of a proton gradient across the membrane. The alpha chain is a regulatory subunit. The chain is ATP synthase subunit alpha from Prochlorococcus marinus (strain MIT 9211).